We begin with the raw amino-acid sequence, 173 residues long: Ribulose bisphosphate carboxylase small subunit, chloroplastic 2 (173 aa).

Residues 1-33 (VVLSKECAKPLATPKVTLNKRGFATTIATKNRE) constitute a chloroplast transit peptide.

This sequence belongs to the RuBisCO small chain family. As to quaternary structure, heterohexadecamer of 8 large and 8 small subunits.

It is found in the plastid. The protein localises to the chloroplast. Its function is as follows. RuBisCO catalyzes two reactions: the carboxylation of D-ribulose 1,5-bisphosphate, the primary event in carbon dioxide fixation, as well as the oxidative fragmentation of the pentose substrate. Both reactions occur simultaneously and in competition at the same active site. Although the small subunit is not catalytic it is essential for maximal activity. This is Ribulose bisphosphate carboxylase small subunit, chloroplastic 2 from Acetabularia acetabulum (Mermaid's wine glass).